The following is a 2299-amino-acid chain: Protein Ycf2 (2299 aa).

1642–1649 serves as a coordination point for ATP; that stretch reads GSIGTGRS.

This sequence belongs to the Ycf2 family.

It is found in the plastid. It localises to the chloroplast stroma. Functionally, probable ATPase of unknown function. Its presence in a non-photosynthetic plant (Epifagus virginiana) and experiments in tobacco indicate that it has an essential function which is probably not related to photosynthesis. The protein is Protein Ycf2 of Nandina domestica (Heavenly bamboo).